The chain runs to 435 residues: Serine hydroxymethyltransferase (435 aa).

Residues leucine 133 and 137-139 (GHL) each bind (6S)-5,6,7,8-tetrahydrofolate. Position 242 is an N6-(pyridoxal phosphate)lysine (lysine 242).

Belongs to the SHMT family. In terms of assembly, homodimer. Pyridoxal 5'-phosphate serves as cofactor.

It is found in the cytoplasm. The catalysed reaction is (6R)-5,10-methylene-5,6,7,8-tetrahydrofolate + glycine + H2O = (6S)-5,6,7,8-tetrahydrofolate + L-serine. Its pathway is one-carbon metabolism; tetrahydrofolate interconversion. It participates in amino-acid biosynthesis; glycine biosynthesis; glycine from L-serine: step 1/1. In terms of biological role, catalyzes the reversible interconversion of serine and glycine with tetrahydrofolate (THF) serving as the one-carbon carrier. This reaction serves as the major source of one-carbon groups required for the biosynthesis of purines, thymidylate, methionine, and other important biomolecules. Also exhibits THF-independent aldolase activity toward beta-hydroxyamino acids, producing glycine and aldehydes, via a retro-aldol mechanism. In Sphingopyxis alaskensis (strain DSM 13593 / LMG 18877 / RB2256) (Sphingomonas alaskensis), this protein is Serine hydroxymethyltransferase.